Consider the following 1175-residue polypeptide: Beta-agarase AgaO (1175 aa).

Positions 1-29 are cleaved as a signal peptide; it reads MRLSKSQGILPLAHAVLAAAIAYSTAATA. Residues 32 to 164 form the CBM6 1 domain; it reads YRLEAEDFTN…QWNLDKMELA (133 aa). The disordered stretch occupies residues 169-208; the sequence is SSSSSGGGSTSSSSSGGSSSSSGSGSSSSGGSPEEGGHVS. Low complexity predominate over residues 178 to 200; that stretch reads TSSSSSGGSSSSSGSGSSSSGGS. A CBM6 2 domain is found at 211–339; that stretch reads FKLEAESAHH…QFNIDYVIFE (129 aa). The interval 355–481 is disordered; the sequence is IADVNDSCPG…ESGCSPSQVA (127 aa). Residues 382–393 show a composition bias toward basic and acidic residues; sequence DTDKDGIADNRD. Over residues 471-481 the composition is skewed to polar residues; sequence NESGCSPSQVA. Catalysis depends on E661, which acts as the Proton donor. E832 acts as the Nucleophile in catalysis.

Belongs to the glycosyl hydrolase 86 family.

The catalysed reaction is Hydrolysis of (1-&gt;4)-beta-D-galactosidic linkages in agarose, giving the tetramer as the predominant product.. Activity and stability are strongly enhanced by CaCl(2). Activity is not affected by sulfhydryl inhibitors such as iodoacetoamide and p-chloromercuribenzoate or by thiol reagents such as dithiothreitol and 2-mercaptoethanol. Strongly inhibited by N-bromosuccinimide and sodium dodecyl sulfate. Endo-type beta-agarase, which degrades agarose and agarose oligosaccharides more polymerized than hexamers to yield neoagarohexaose (NA6) as the main product, with lesser amounts of neoagarotetraose (NA4) and neoagarobiose (NA2). The protein is Beta-agarase AgaO of Microbulbifer thermotolerans.